We begin with the raw amino-acid sequence, 267 residues long: 2-keto-3-deoxy-L-rhamnonate aldolase (267 aa).

H49 acts as the Proton acceptor in catalysis. Position 151 (Q151) interacts with substrate. Residue E153 participates in Mg(2+) binding. A178 and D179 together coordinate substrate. D179 is a Mg(2+) binding site.

The protein belongs to the HpcH/HpaI aldolase family. KDR aldolase subfamily. Homohexamer. Mg(2+) serves as cofactor.

The enzyme catalyses 2-dehydro-3-deoxy-L-rhamnonate = (S)-lactaldehyde + pyruvate. Functionally, catalyzes the reversible retro-aldol cleavage of 2-keto-3-deoxy-L-rhamnonate (KDR) to pyruvate and lactaldehyde. This is 2-keto-3-deoxy-L-rhamnonate aldolase from Salmonella enteritidis PT4 (strain P125109).